A 452-amino-acid polypeptide reads, in one-letter code: UDP-N-acetylmuramoylalanine--D-glutamate ligase (452 aa).

Residue 119–125 (GSNGKTT) participates in ATP binding.

It belongs to the MurCDEF family.

It is found in the cytoplasm. It carries out the reaction UDP-N-acetyl-alpha-D-muramoyl-L-alanine + D-glutamate + ATP = UDP-N-acetyl-alpha-D-muramoyl-L-alanyl-D-glutamate + ADP + phosphate + H(+). Its pathway is cell wall biogenesis; peptidoglycan biosynthesis. Its function is as follows. Cell wall formation. Catalyzes the addition of glutamate to the nucleotide precursor UDP-N-acetylmuramoyl-L-alanine (UMA). This chain is UDP-N-acetylmuramoylalanine--D-glutamate ligase, found in Streptococcus pyogenes serotype M6 (strain ATCC BAA-946 / MGAS10394).